The primary structure comprises 361 residues: MASAVVSMVPTTASRFALLQVDSSSDSDSEKARGAHSSGKAHSGSAARGKNKGNEKKKEKRRKKKEQQQSEANELRNLAFKKIPPKASPGVAVQEHLTHTVPKVAQEEDWQQWQQRDVQLTSDMYEADLEKALILSKLEFEESKDNGNGDNGVPQSKKVNKKDKRKNNQGKDKPLTVPLKDFQLEDKHAKKQEELKSPPLPQDSGFFNKLEEDVTKIILKEKRKEHSTDVTEQFATPEYSMEPVLKDGRTEVLKQEIEKKEVELKQMKSIISQWEAKYREVKARNSQLLKMLQEGEMKDKAEILLQVDELLSIKNELTLQVTTLHAALEQERSKVKILQAEQVKYQGGKKSKRTAELEHGR.

Disordered regions lie at residues 22–111 (DSSS…EDWQ) and 140–183 (FEES…KDFQ). The span at 35–48 (AHSSGKAHSGSAAR) shows a compositional bias: low complexity. Residues 51–79 (NKGNEKKKEKRRKKKEQQQSEANELRNLA) are a coiled coil. Positions 158 to 168 (KVNKKDKRKNN) are enriched in basic residues. Coiled coils occupy residues 246 to 296 (KDGR…QEGE) and 326 to 346 (AALEQERSKVKILQAEQVKYQ).

It belongs to the GKAP1 family.

Its subcellular location is the golgi apparatus. Functionally, may play a role in the regulation of insulin-dependent IRS1 tyrosine phosphorylation in adipocytes. The chain is G kinase-anchoring protein 1-A (gkap1-a) from Xenopus laevis (African clawed frog).